Here is a 667-residue protein sequence, read N- to C-terminus: Threonine--tRNA ligase (667 aa).

Positions 1–64 (MSEAISLTFP…TDGKIEIVTR (64 aa)) constitute a TGS domain. The catalytic stretch occupies residues 245–553 (DHRRLGREMD…LIENFAGHMP (309 aa)). Positions 347, 398, and 530 each coordinate Zn(2+).

The protein belongs to the class-II aminoacyl-tRNA synthetase family. In terms of assembly, homodimer. The cofactor is Zn(2+).

Its subcellular location is the cytoplasm. The enzyme catalyses tRNA(Thr) + L-threonine + ATP = L-threonyl-tRNA(Thr) + AMP + diphosphate + H(+). In terms of biological role, catalyzes the attachment of threonine to tRNA(Thr) in a two-step reaction: L-threonine is first activated by ATP to form Thr-AMP and then transferred to the acceptor end of tRNA(Thr). Also edits incorrectly charged L-seryl-tRNA(Thr). This chain is Threonine--tRNA ligase, found in Agrobacterium fabrum (strain C58 / ATCC 33970) (Agrobacterium tumefaciens (strain C58)).